Reading from the N-terminus, the 183-residue chain is Ribose 1,5-bisphosphate phosphokinase PhnN (183 aa).

It belongs to the ribose 1,5-bisphosphokinase family.

It carries out the reaction alpha-D-ribose 1,5-bisphosphate + ATP = 5-phospho-alpha-D-ribose 1-diphosphate + ADP. It functions in the pathway metabolic intermediate biosynthesis; 5-phospho-alpha-D-ribose 1-diphosphate biosynthesis; 5-phospho-alpha-D-ribose 1-diphosphate from D-ribose 5-phosphate (route II): step 3/3. Catalyzes the phosphorylation of ribose 1,5-bisphosphate to 5-phospho-D-ribosyl alpha-1-diphosphate (PRPP). The chain is Ribose 1,5-bisphosphate phosphokinase PhnN from Azotobacter vinelandii (strain DJ / ATCC BAA-1303).